We begin with the raw amino-acid sequence, 872 residues long: Translation initiation factor IF-2 (872 aa).

The span at 130–155 (AEEEAARAAEEEAARLAEEEAARRAA) shows a compositional bias: basic and acidic residues. The interval 130–282 (AEEEAARAAE…RERERLKHMQ (153 aa)) is disordered. Over residues 156 to 181 (EPQSEPEAAAPAAEPVAPTAPVAAAP) the composition is skewed to low complexity. Residues 182–194 (APAPATPVAPAQP) show a composition bias toward pro residues. Residues 195 to 211 (KPVAAAAPAGDATAVPR) are compositionally biased toward low complexity. Positions 271 to 282 (RARERERLKHMQ) are enriched in basic and acidic residues. Residues 371–539 (TRPPVVTVMG…AILLQAEILD (169 aa)) form the tr-type G domain. The interval 380–387 (GHVDHGKT) is G1. 380–387 (GHVDHGKT) lines the GTP pocket. A G2 region spans residues 405–409 (GITQH). Positions 427-430 (DTPG) are G3. GTP is bound by residues 427 to 431 (DTPGH) and 481 to 484 (NKID). The tract at residues 481 to 484 (NKID) is G4. The interval 517–519 (SAK) is G5.

This sequence belongs to the TRAFAC class translation factor GTPase superfamily. Classic translation factor GTPase family. IF-2 subfamily.

It localises to the cytoplasm. In terms of biological role, one of the essential components for the initiation of protein synthesis. Protects formylmethionyl-tRNA from spontaneous hydrolysis and promotes its binding to the 30S ribosomal subunits. Also involved in the hydrolysis of GTP during the formation of the 70S ribosomal complex. The polypeptide is Translation initiation factor IF-2 (Paramagnetospirillum magneticum (strain ATCC 700264 / AMB-1) (Magnetospirillum magneticum)).